The sequence spans 212 residues: Protein-L-isoaspartate O-methyltransferase (212 aa).

The active site involves S60.

The protein belongs to the methyltransferase superfamily. L-isoaspartyl/D-aspartyl protein methyltransferase family.

It localises to the cytoplasm. The catalysed reaction is [protein]-L-isoaspartate + S-adenosyl-L-methionine = [protein]-L-isoaspartate alpha-methyl ester + S-adenosyl-L-homocysteine. Catalyzes the methyl esterification of L-isoaspartyl residues in peptides and proteins that result from spontaneous decomposition of normal L-aspartyl and L-asparaginyl residues. It plays a role in the repair and/or degradation of damaged proteins. This Methylorubrum populi (strain ATCC BAA-705 / NCIMB 13946 / BJ001) (Methylobacterium populi) protein is Protein-L-isoaspartate O-methyltransferase.